Here is a 345-residue protein sequence, read N- to C-terminus: Phosphoribosylformylglycinamidine cyclo-ligase (345 aa).

It belongs to the AIR synthase family.

It localises to the cytoplasm. The catalysed reaction is 2-formamido-N(1)-(5-O-phospho-beta-D-ribosyl)acetamidine + ATP = 5-amino-1-(5-phospho-beta-D-ribosyl)imidazole + ADP + phosphate + H(+). It functions in the pathway purine metabolism; IMP biosynthesis via de novo pathway; 5-amino-1-(5-phospho-D-ribosyl)imidazole from N(2)-formyl-N(1)-(5-phospho-D-ribosyl)glycinamide: step 2/2. This is Phosphoribosylformylglycinamidine cyclo-ligase from Anaeromyxobacter sp. (strain K).